Reading from the N-terminus, the 514-residue chain is Maturase K (514 aa).

Belongs to the intron maturase 2 family. MatK subfamily.

It is found in the plastid. The protein resides in the chloroplast. Usually encoded in the trnK tRNA gene intron. Probably assists in splicing its own and other chloroplast group II introns. The sequence is that of Maturase K from Dioon spinulosum (Gum palm).